The chain runs to 85 residues: Cell division topological specificity factor (85 aa).

Belongs to the MinE family.

Its function is as follows. Prevents the cell division inhibition by proteins MinC and MinD at internal division sites while permitting inhibition at polar sites. This ensures cell division at the proper site by restricting the formation of a division septum at the midpoint of the long axis of the cell. The polypeptide is Cell division topological specificity factor (Shewanella amazonensis (strain ATCC BAA-1098 / SB2B)).